Here is a 261-residue protein sequence, read N- to C-terminus: MIIADNIKQLHSIRNSLIKQQKIGFVPTMGALHNGHISLIKKAKSENDVVIVSIFVNPTQFNNPNDYQTYPNQLQQDIQILESLDVDVLFNPSEKDIYPDGNLLRIEPKLEIANILEGKSRPGHFSGMLTVVLKLLQITKPNNLYLGEKDYQQVMLIKQLVKDFFINTKIIVCPTQRQPSGLPLSSRNKNLTSTDIEIANKIYEILRQDDFSNLEELTNKINSAGAKLQYIQKLNNRIFLAFYIGKVRLIDNFLKETGPSC.

M29–H36 is an ATP binding site. H36 serves as the catalytic Proton donor. Position 60 (Q60) interacts with (R)-pantoate. Q60 is a binding site for beta-alanine. ATP is bound at residue G147–D150. (R)-pantoate is bound at residue Q153. ATP is bound at residue L184 to R187.

Belongs to the pantothenate synthetase family. Homodimer.

The protein resides in the cytoplasm. It catalyses the reaction (R)-pantoate + beta-alanine + ATP = (R)-pantothenate + AMP + diphosphate + H(+). It participates in cofactor biosynthesis; (R)-pantothenate biosynthesis; (R)-pantothenate from (R)-pantoate and beta-alanine: step 1/1. Its function is as follows. Catalyzes the condensation of pantoate with beta-alanine in an ATP-dependent reaction via a pantoyl-adenylate intermediate. This chain is Pantothenate synthetase, found in Francisella tularensis subsp. novicida (strain U112).